A 246-amino-acid polypeptide reads, in one-letter code: Acetoacetyl-CoA reductase (246 aa).

NADP(+) contacts are provided by residues 12–14 and 88–92; these read GGI and CAGIT. Substrate contacts are provided by residues Asp-94 and 147–150; that span reads QFGQ. The active-site Proton acceptor is the Tyr-153. 183-186 lines the NADP(+) pocket; that stretch reads PGYV. A substrate-binding site is contributed by 184 to 185; sequence GY.

The protein belongs to the short-chain dehydrogenases/reductases (SDR) family.

The protein resides in the cytoplasm. The catalysed reaction is a (3R)-3-hydroxyacyl-CoA + NADP(+) = a 3-oxoacyl-CoA + NADPH + H(+). Its pathway is biopolymer metabolism; poly-(R)-3-hydroxybutanoate biosynthesis. This Allochromatium vinosum (strain ATCC 17899 / DSM 180 / NBRC 103801 / NCIMB 10441 / D) (Chromatium vinosum) protein is Acetoacetyl-CoA reductase.